We begin with the raw amino-acid sequence, 351 residues long: Anthranilate phosphoribosyltransferase (351 aa).

Residues glycine 84, 87–88 (GD), 95–98 (NISS), 113–121 (KHGNRGASS), and alanine 125 each bind 5-phospho-alpha-D-ribose 1-diphosphate. Glycine 84 is a binding site for anthranilate. Serine 97 contacts Mg(2+). Asparagine 116 contacts anthranilate. Arginine 171 serves as a coordination point for anthranilate. Residues aspartate 229 and lysine 230 each coordinate Mg(2+).

This sequence belongs to the anthranilate phosphoribosyltransferase family. In terms of assembly, homodimer. The cofactor is Mg(2+).

The catalysed reaction is N-(5-phospho-beta-D-ribosyl)anthranilate + diphosphate = 5-phospho-alpha-D-ribose 1-diphosphate + anthranilate. It functions in the pathway amino-acid biosynthesis; L-tryptophan biosynthesis; L-tryptophan from chorismate: step 2/5. Functionally, catalyzes the transfer of the phosphoribosyl group of 5-phosphorylribose-1-pyrophosphate (PRPP) to anthranilate to yield N-(5'-phosphoribosyl)-anthranilate (PRA). The polypeptide is Anthranilate phosphoribosyltransferase (Clavibacter sepedonicus (Clavibacter michiganensis subsp. sepedonicus)).